A 291-amino-acid polypeptide reads, in one-letter code: N-acetylmannosamine kinase (291 aa).

ATP contacts are provided by residues 5–12 and 132–139; these read AIDIGGTK and GVGGGVVS. Residues H156, C166, C168, and C173 each coordinate Zn(2+).

This sequence belongs to the ROK (NagC/XylR) family. NanK subfamily. In terms of assembly, homodimer.

The catalysed reaction is an N-acyl-D-mannosamine + ATP = an N-acyl-D-mannosamine 6-phosphate + ADP + H(+). Its pathway is amino-sugar metabolism; N-acetylneuraminate degradation; D-fructose 6-phosphate from N-acetylneuraminate: step 2/5. Catalyzes the phosphorylation of N-acetylmannosamine (ManNAc) to ManNAc-6-P. In Shigella flexneri serotype 5b (strain 8401), this protein is N-acetylmannosamine kinase.